The chain runs to 334 residues: Protein-methionine-sulfoxide reductase catalytic subunit MsrP (334 aa).

The tat-type signal signal peptide spans 1 to 44 (MKKNQFLKESDVTAESVFFMKRRQVLKALGISAAAFSLPHAAHA). Residues asparagine 88, 91 to 92 (YE), cysteine 146, threonine 181, asparagine 233, arginine 238, and 249 to 251 (GIK) contribute to the Mo-molybdopterin site.

The protein belongs to the MsrP family. Heterodimer of a catalytic subunit (MsrP) and a heme-binding subunit (MsrQ). Mo-molybdopterin serves as cofactor. Predicted to be exported by the Tat system. The position of the signal peptide cleavage has not been experimentally proven.

The protein localises to the periplasm. It carries out the reaction L-methionyl-[protein] + a quinone + H2O = L-methionyl-(S)-S-oxide-[protein] + a quinol. The enzyme catalyses L-methionyl-[protein] + a quinone + H2O = L-methionyl-(R)-S-oxide-[protein] + a quinol. Functionally, part of the MsrPQ system that repairs oxidized periplasmic proteins containing methionine sulfoxide residues (Met-O), using respiratory chain electrons. Thus protects these proteins from oxidative-stress damage caused by reactive species of oxygen and chlorine generated by the host defense mechanisms. MsrPQ is essential for the maintenance of envelope integrity under bleach stress, rescuing a wide series of structurally unrelated periplasmic proteins from methionine oxidation, including the primary periplasmic chaperone SurA and the lipoprotein Pal. The catalytic subunit MsrP is non-stereospecific, being able to reduce both (R-) and (S-) diastereoisomers of methionine sulfoxide. The protein is Protein-methionine-sulfoxide reductase catalytic subunit MsrP of Escherichia coli O6:H1 (strain CFT073 / ATCC 700928 / UPEC).